Here is a 347-residue protein sequence, read N- to C-terminus: NADH-quinone oxidoreductase subunit H 1 (347 aa).

9 helical membrane-spanning segments follow: residues 13 to 33 (IIMIGQSLLLLVCLLVFIAYV), 50 to 70 (PNVVGPFGLFQSFADLLKFVF), 82 to 102 (AVFLLAPLVTVLLALSTWAVV), 115 to 135 (VGILYIFAISSLEVYGIIMGG), 161 to 181 (IGFVIVTVLLCVGSLNLTDIV), 198 to 218 (FLDWHWLSLFPMFIVFFISAL), 263 to 283 (CALTTILFLGGWLPPVDIWIL), 286 to 306 (VPGIIWFTLKACLVFFMFAMV), and 321 to 341 (LGWKVFLPLSLAMVIIVAFVL).

The protein belongs to the complex I subunit 1 family. NDH-1 is composed of 14 different subunits. Subunits NuoA, H, J, K, L, M, N constitute the membrane sector of the complex.

The protein resides in the cell inner membrane. The enzyme catalyses a quinone + NADH + 5 H(+)(in) = a quinol + NAD(+) + 4 H(+)(out). Functionally, NDH-1 shuttles electrons from NADH, via FMN and iron-sulfur (Fe-S) centers, to quinones in the respiratory chain. The immediate electron acceptor for the enzyme in this species is believed to be ubiquinone. Couples the redox reaction to proton translocation (for every two electrons transferred, four hydrogen ions are translocated across the cytoplasmic membrane), and thus conserves the redox energy in a proton gradient. This subunit may bind ubiquinone. This is NADH-quinone oxidoreductase subunit H 1 from Rhizobium etli (strain ATCC 51251 / DSM 11541 / JCM 21823 / NBRC 15573 / CFN 42).